The sequence spans 346 residues: GTPase Obg (346 aa).

Positions 1 to 158 (MFIDKAKIYV…RWIELELKLL (158 aa)) constitute an Obg domain. Residues 159-330 (ADVGIIGFPN…LINLIRETRD (172 aa)) form the OBG-type G domain. GTP-binding positions include 165–172 (GFPNAGKS), 190–194 (FTTLT), 212–215 (DIPG), 282–285 (NKID), and 311–313 (SLI). S172 and T192 together coordinate Mg(2+).

This sequence belongs to the TRAFAC class OBG-HflX-like GTPase superfamily. OBG GTPase family. As to quaternary structure, monomer. Mg(2+) is required as a cofactor.

It localises to the cytoplasm. An essential GTPase which binds GTP, GDP and possibly (p)ppGpp with moderate affinity, with high nucleotide exchange rates and a fairly low GTP hydrolysis rate. Plays a role in control of the cell cycle, stress response, ribosome biogenesis and in those bacteria that undergo differentiation, in morphogenesis control. The protein is GTPase Obg of Sulfurihydrogenibium sp. (strain YO3AOP1).